The primary structure comprises 1601 residues: Ectopic P granules protein 5 (1601 aa).

The interval 1-109 (MAELVRPKKP…EAPPIPARNL (109 aa)) is disordered. Residues 15–26 (RPQSDDAPRIPD) are compositionally biased toward basic and acidic residues.

The protein belongs to the EPG5 family.

The protein localises to the cytoplasm. Functionally, involved in autophagy. Has a role in the degradation of protein aggregates within autophagosomes. Essential for starvation-induced autotrophy and omegasome development. The chain is Ectopic P granules protein 5 (epg-5) from Caenorhabditis briggsae.